A 513-amino-acid chain; its full sequence is Bifunctional purine biosynthesis protein PurH (513 aa).

The 146-residue stretch at 1–146 folds into the MGS-like domain; the sequence is MPRFALLSVS…KNHAHLTILT (146 aa).

This sequence belongs to the PurH family.

The enzyme catalyses (6R)-10-formyltetrahydrofolate + 5-amino-1-(5-phospho-beta-D-ribosyl)imidazole-4-carboxamide = 5-formamido-1-(5-phospho-D-ribosyl)imidazole-4-carboxamide + (6S)-5,6,7,8-tetrahydrofolate. It catalyses the reaction IMP + H2O = 5-formamido-1-(5-phospho-D-ribosyl)imidazole-4-carboxamide. It participates in purine metabolism; IMP biosynthesis via de novo pathway; 5-formamido-1-(5-phospho-D-ribosyl)imidazole-4-carboxamide from 5-amino-1-(5-phospho-D-ribosyl)imidazole-4-carboxamide (10-formyl THF route): step 1/1. It functions in the pathway purine metabolism; IMP biosynthesis via de novo pathway; IMP from 5-formamido-1-(5-phospho-D-ribosyl)imidazole-4-carboxamide: step 1/1. The sequence is that of Bifunctional purine biosynthesis protein PurH from Synechococcus elongatus (strain ATCC 33912 / PCC 7942 / FACHB-805) (Anacystis nidulans R2).